The sequence spans 236 residues: 15,16-dihydrobiliverdin:ferredoxin oxidoreductase (236 aa).

This sequence belongs to the HY2 family.

The enzyme catalyses 15,16-dihydrobiliverdin + oxidized 2[4Fe-4S]-[ferredoxin] = biliverdin IXalpha + reduced 2[4Fe-4S]-[ferredoxin] + 2 H(+). Functionally, catalyzes the two-electron reduction of biliverdin IX-alpha at the C15 methine bridge. This chain is 15,16-dihydrobiliverdin:ferredoxin oxidoreductase, found in Prochlorococcus marinus (strain MIT 9515).